A 144-amino-acid polypeptide reads, in one-letter code: Small ribosomal subunit protein uS11c (144 aa).

The protein belongs to the universal ribosomal protein uS11 family. As to quaternary structure, part of the 30S ribosomal subunit.

It is found in the plastid. It localises to the chloroplast. The protein is Small ribosomal subunit protein uS11c of Oenothera biennis (German evening primrose).